We begin with the raw amino-acid sequence, 305 residues long: Deoxyhypusine hydroxylase (305 aa).

HEAT-like PBS-type repeat units lie at residues 54-80 (LKHE…VLKD) and 87-113 (VRHE…YAED). 3 residues coordinate Fe cation: histidine 56, histidine 89, and glutamate 90. The interval 137–160 (EQTKDGTDENPYCSVDPAPPAQRK) is disordered. HEAT-like PBS-type repeat units lie at residues 178 to 204 (DRYR…GLQC), 209 to 235 (FRHE…ALEK), and 242 to 268 (VRHE…YRKD). 3 residues coordinate Fe cation: histidine 211, histidine 244, and glutamate 245.

Belongs to the deoxyhypusine hydroxylase family. Fe(2+) serves as cofactor.

The catalysed reaction is [eIF5A protein]-deoxyhypusine + AH2 + O2 = [eIF5A protein]-hypusine + A + H2O. Its pathway is protein modification; eIF5A hypusination. In terms of biological role, catalyzes the hydroxylation of the N(6)-(4-aminobutyl)-L-lysine intermediate produced by deoxyhypusine synthase/DHPS on a critical lysine of the eukaryotic translation initiation factor 5A/eIF-5A. This is the second step of the post-translational modification of that lysine into an unusual amino acid residue named hypusine. Hypusination is unique to mature eIF-5A factor and is essential for its function. The protein is Deoxyhypusine hydroxylase (dohh) of Danio rerio (Zebrafish).